Reading from the N-terminus, the 612-residue chain is UvrABC system protein C (612 aa).

A GIY-YIG domain is found at 20–98 (THSGVYRMLD…IKQHRPKYNI (79 aa)). In terms of domain architecture, UVR spans 208-243 (SSVLEEISAKMYQASEDMEYEKAQVYRDQLVVLRKL).

The protein belongs to the UvrC family. Interacts with UvrB in an incision complex.

Its subcellular location is the cytoplasm. In terms of biological role, the UvrABC repair system catalyzes the recognition and processing of DNA lesions. UvrC both incises the 5' and 3' sides of the lesion. The N-terminal half is responsible for the 3' incision and the C-terminal half is responsible for the 5' incision. This chain is UvrABC system protein C, found in Francisella tularensis subsp. tularensis (strain WY96-3418).